The chain runs to 209 residues: Ribosomal RNA small subunit methyltransferase G (209 aa).

S-adenosyl-L-methionine is bound by residues G71, F76, 122-123, and R135; that span reads AE.

The protein belongs to the methyltransferase superfamily. RNA methyltransferase RsmG family.

It is found in the cytoplasm. In terms of biological role, specifically methylates the N7 position of a guanine in 16S rRNA. The protein is Ribosomal RNA small subunit methyltransferase G of Phocaeicola vulgatus (strain ATCC 8482 / DSM 1447 / JCM 5826 / CCUG 4940 / NBRC 14291 / NCTC 11154) (Bacteroides vulgatus).